The primary structure comprises 202 residues: Glycerol-3-phosphate acyltransferase (202 aa).

The next 6 helical transmembrane spans lie at 2 to 22 (MIIV…GFVI), 54 to 74 (FLVT…PLWL), 85 to 105 (FFTN…YPVY), 120 to 140 (VVLG…FIVL), 141 to 161 (KIFK…VIGS), and 162 to 182 (LIIQ…ILII).

It belongs to the PlsY family. Probably interacts with PlsX.

It localises to the cell membrane. It carries out the reaction an acyl phosphate + sn-glycerol 3-phosphate = a 1-acyl-sn-glycero-3-phosphate + phosphate. The protein operates within lipid metabolism; phospholipid metabolism. In terms of biological role, catalyzes the transfer of an acyl group from acyl-phosphate (acyl-PO(4)) to glycerol-3-phosphate (G3P) to form lysophosphatidic acid (LPA). This enzyme utilizes acyl-phosphate as fatty acyl donor, but not acyl-CoA or acyl-ACP. In Staphylococcus aureus (strain USA300), this protein is Glycerol-3-phosphate acyltransferase.